We begin with the raw amino-acid sequence, 292 residues long: Shikimate dehydrogenase (NADP(+)) (292 aa).

Residues 22–24 (SLS) and S69 contribute to the shikimate site. Catalysis depends on K73, which acts as the Proton acceptor. Positions 94 and 111 each coordinate shikimate. NADP(+) is bound by residues 135-139 (GVGGA) and I236. Residue Y238 participates in shikimate binding. An NADP(+)-binding site is contributed by G260.

It belongs to the shikimate dehydrogenase family. Homodimer.

The catalysed reaction is shikimate + NADP(+) = 3-dehydroshikimate + NADPH + H(+). It participates in metabolic intermediate biosynthesis; chorismate biosynthesis; chorismate from D-erythrose 4-phosphate and phosphoenolpyruvate: step 4/7. Involved in the biosynthesis of the chorismate, which leads to the biosynthesis of aromatic amino acids. Catalyzes the reversible NADPH linked reduction of 3-dehydroshikimate (DHSA) to yield shikimate (SA). In Streptococcus pyogenes serotype M28 (strain MGAS6180), this protein is Shikimate dehydrogenase (NADP(+)).